The primary structure comprises 275 residues: Uridine-5'-phosphate dioxygenase (275 aa).

Fe cation contacts are provided by histidine 105, aspartate 107, and histidine 247.

It depends on Fe(2+) as a cofactor.

It carries out the reaction UMP + 2-oxoglutarate + O2 = uridine-5'-aldehyde + succinate + phosphate + CO2. The protein operates within antibiotic biosynthesis. With respect to regulation, enhanced by ascorbic acid and inhibited by Zn(2+). Functionally, dioxygenase involved in the biosynthesis of the capuramycin-type nucleoside antibiotic A-102395. Catalyzes the dephosphorylation and oxidation of UMP to generate uridine-5'-aldehyde. Can also use the alternative alpha-keto acids pyruvate and alpha-ketoadipate (2-oxoadipate), with very low efficiency. Cannot use alpha-ketobutyrate, alpha-ketovalerate and oxaloacetate. The protein is Uridine-5'-phosphate dioxygenase of Amycolatopsis sp.